A 440-amino-acid polypeptide reads, in one-letter code: Tryptophan synthase beta chain 2 (440 aa).

Residue Lys110 is modified to N6-(pyridoxal phosphate)lysine.

It belongs to the TrpB family. As to quaternary structure, tetramer of two alpha and two beta chains. Pyridoxal 5'-phosphate is required as a cofactor.

It carries out the reaction (1S,2R)-1-C-(indol-3-yl)glycerol 3-phosphate + L-serine = D-glyceraldehyde 3-phosphate + L-tryptophan + H2O. It participates in amino-acid biosynthesis; L-tryptophan biosynthesis; L-tryptophan from chorismate: step 5/5. Its function is as follows. The beta subunit is responsible for the synthesis of L-tryptophan from indole and L-serine. This is Tryptophan synthase beta chain 2 (trpB2) from Pyrococcus abyssi (strain GE5 / Orsay).